The primary structure comprises 607 residues: UPF0329 protein ECU06_1610 (607 aa).

2 disordered regions span residues 312–410 (VHEV…RSKG) and 531–570 (TSSE…PPGV). Positions 313 to 347 (HEVKERESEEKRREEESLRNAEELLRMEEREKGEG) are enriched in basic and acidic residues. The span at 353-364 (KGKKKRGKKGAG) shows a compositional bias: basic residues. The segment covering 365–374 (KAKEESKEED) has biased composition (basic and acidic residues). Residues 375–393 (RGEEEEESVEAEVPVEEMA) are compositionally biased toward acidic residues. A compositionally biased stretch (polar residues) spans 531–543 (TSSEKTGKGSSPS). A compositionally biased stretch (acidic residues) spans 549–558 (DVDEIEEDGS).

This sequence belongs to the UPF0329 family.

The sequence is that of UPF0329 protein ECU06_1610 from Encephalitozoon cuniculi (strain GB-M1) (Microsporidian parasite).